The following is a 206-amino-acid chain: MILSDKDIFDYVNSKRVLIEPFNSKFVGPCSYDVTLGSEFIKYKDDVYDLKKSLSHNKFEIENSIMICPLNHHLDETIIKNYKEKYNVNCVVSGGLLGTTNEYVELPNDVCAQYQGRSSFGRVFLQTHQTAGWIDSGFKGKITLEIVAYDKPVILYKNQRVGQLIFSKTLSPADTGYSDRECSKYAGQKSVMASLIKKDFEIDEEE.

DCTP is bound by residues 117–122 (RSSFGR), aspartate 135, 143–145 (TLE), glutamine 163, tyrosine 177, lysine 184, and glutamine 188. Glutamate 145 serves as the catalytic Proton donor/acceptor.

The protein belongs to the dCTP deaminase family. Homotrimer.

It carries out the reaction dCTP + 2 H2O = dUMP + NH4(+) + diphosphate. It participates in pyrimidine metabolism; dUMP biosynthesis; dUMP from dCTP: step 1/1. In terms of biological role, bifunctional enzyme that catalyzes both the deamination of dCTP to dUTP and the hydrolysis of dUTP to dUMP without releasing the toxic dUTP intermediate. This chain is dCTP deaminase, dUMP-forming, found in Methanococcus maripaludis (strain C5 / ATCC BAA-1333).